Consider the following 419-residue polypeptide: Gamma-glutamyl phosphate reductase (419 aa).

Belongs to the gamma-glutamyl phosphate reductase family.

The protein localises to the cytoplasm. The catalysed reaction is L-glutamate 5-semialdehyde + phosphate + NADP(+) = L-glutamyl 5-phosphate + NADPH + H(+). Its pathway is amino-acid biosynthesis; L-proline biosynthesis; L-glutamate 5-semialdehyde from L-glutamate: step 2/2. In terms of biological role, catalyzes the NADPH-dependent reduction of L-glutamate 5-phosphate into L-glutamate 5-semialdehyde and phosphate. The product spontaneously undergoes cyclization to form 1-pyrroline-5-carboxylate. The chain is Gamma-glutamyl phosphate reductase from Yersinia pestis.